We begin with the raw amino-acid sequence, 96 residues long: Small ribosomal subunit protein bS18 (96 aa).

A compositionally biased stretch (basic residues) spans 1–18 (MPPPRGKGRFGKDKRPKR). The segment at 1–21 (MPPPRGKGRFGKDKRPKRNTQ) is disordered.

The protein belongs to the bacterial ribosomal protein bS18 family. Part of the 30S ribosomal subunit. Forms a tight heterodimer with protein bS6.

In terms of biological role, binds as a heterodimer with protein bS6 to the central domain of the 16S rRNA, where it helps stabilize the platform of the 30S subunit. In Methylibium petroleiphilum (strain ATCC BAA-1232 / LMG 22953 / PM1), this protein is Small ribosomal subunit protein bS18.